The following is a 151-amino-acid chain: UPF0178 protein YaiI (151 aa).

It belongs to the UPF0178 family.

The protein is UPF0178 protein YaiI of Salmonella paratyphi B (strain ATCC BAA-1250 / SPB7).